A 191-amino-acid chain; its full sequence is Adenylate kinase (191 aa).

9–17 (GVPGVGATT) lines the ATP pocket.

Belongs to the archaeal adenylate kinase family.

It is found in the cytoplasm. The catalysed reaction is AMP + ATP = 2 ADP. In Methanopyrus kandleri (strain AV19 / DSM 6324 / JCM 9639 / NBRC 100938), this protein is Adenylate kinase.